Here is a 167-residue protein sequence, read N- to C-terminus: Protein DLS1 (167 aa).

The residue at position 17 (Ser17) is a Phosphoserine.

In terms of assembly, component of the ISW2 complex, which at least consists of ISW2, ITC1, DLS1 and DPB4.

Its subcellular location is the nucleus. Functions as a component of the ISW2 complex, which acts in remodeling the chromatin by catalyzing an ATP-dependent alteration in the structure of nucleosomal DNA. The ISW2 complex is involved in coordinating transcriptional repression and in inheritance of telomeric silencing. It is involved in repression of MAT a-specific genes, INO1, and early meiotic genes during mitotic growth dependent upon transcription factor UME6 and in a parallel pathway to the RPD3-SIN3 histone deacetylase complex. DLS1 is partially required for the ISW2 complex chromatin remodeling activity and is not required for its interaction with chromatin. This is Protein DLS1 (DLS1) from Saccharomyces cerevisiae (strain ATCC 204508 / S288c) (Baker's yeast).